The primary structure comprises 491 residues: Glutamate--tRNA ligase (491 aa).

A 'HIGH' region motif is present at residues 13-23 (PSPTGFLHIGN). 4 residues coordinate Zn(2+): Cys-110, Cys-112, Cys-137, and His-139. The 'KMSKS' region motif lies at 254 to 258 (KLSKR). Lys-257 is a binding site for ATP.

Belongs to the class-I aminoacyl-tRNA synthetase family. Glutamate--tRNA ligase type 1 subfamily. In terms of assembly, monomer. It depends on Zn(2+) as a cofactor.

Its subcellular location is the cytoplasm. The catalysed reaction is tRNA(Glu) + L-glutamate + ATP = L-glutamyl-tRNA(Glu) + AMP + diphosphate. Its function is as follows. Catalyzes the attachment of glutamate to tRNA(Glu) in a two-step reaction: glutamate is first activated by ATP to form Glu-AMP and then transferred to the acceptor end of tRNA(Glu). The protein is Glutamate--tRNA ligase of Listeria innocua serovar 6a (strain ATCC BAA-680 / CLIP 11262).